The chain runs to 661 residues: uncharacterized protein (661 aa).

Positions Met-1–Ala-24 are cleaved as a signal peptide. 6 consecutive transmembrane segments (helical) span residues Ile-226–Thr-246, Ile-254–Leu-274, Ile-410–Ile-430, Cys-436–Phe-456, Val-469–Thr-489, and Val-562–Phe-582. The interval Gly-629–Lys-661 is disordered.

The protein belongs to the TrbL/VirB6 family.

The protein localises to the cell membrane. This is an uncharacterized protein from Rickettsia conorii (strain ATCC VR-613 / Malish 7).